Reading from the N-terminus, the 325-residue chain is Acetyl-coenzyme A carboxylase carboxyl transferase subunit alpha (325 aa).

Residues 35–292 (EIEKLEARLA…DKVLKRSLKQ (258 aa)) enclose the CoA carboxyltransferase C-terminal domain.

It belongs to the AccA family. As to quaternary structure, acetyl-CoA carboxylase is a heterohexamer composed of biotin carboxyl carrier protein (AccB), biotin carboxylase (AccC) and two subunits each of ACCase subunit alpha (AccA) and ACCase subunit beta (AccD).

It localises to the cytoplasm. The enzyme catalyses N(6)-carboxybiotinyl-L-lysyl-[protein] + acetyl-CoA = N(6)-biotinyl-L-lysyl-[protein] + malonyl-CoA. The protein operates within lipid metabolism; malonyl-CoA biosynthesis; malonyl-CoA from acetyl-CoA: step 1/1. Its function is as follows. Component of the acetyl coenzyme A carboxylase (ACC) complex. First, biotin carboxylase catalyzes the carboxylation of biotin on its carrier protein (BCCP) and then the CO(2) group is transferred by the carboxyltransferase to acetyl-CoA to form malonyl-CoA. The protein is Acetyl-coenzyme A carboxylase carboxyl transferase subunit alpha of Geobacillus sp. (strain WCH70).